We begin with the raw amino-acid sequence, 718 residues long: Ribosomal RNA large subunit methyltransferase K/L (718 aa).

Residues 44–155 (DAYKVCIYSH…KQYVNVFLCL (112 aa)) form the THUMP domain.

This sequence belongs to the methyltransferase superfamily. RlmKL family.

The protein localises to the cytoplasm. The catalysed reaction is guanosine(2445) in 23S rRNA + S-adenosyl-L-methionine = N(2)-methylguanosine(2445) in 23S rRNA + S-adenosyl-L-homocysteine + H(+). It carries out the reaction guanosine(2069) in 23S rRNA + S-adenosyl-L-methionine = N(2)-methylguanosine(2069) in 23S rRNA + S-adenosyl-L-homocysteine + H(+). Functionally, specifically methylates the guanine in position 2445 (m2G2445) and the guanine in position 2069 (m7G2069) of 23S rRNA. The chain is Ribosomal RNA large subunit methyltransferase K/L from Francisella philomiragia subsp. philomiragia (strain ATCC 25017 / CCUG 19701 / FSC 153 / O#319-036).